The following is a 229-amino-acid chain: Peroxiredoxin-like 2A (229 aa).

Residues 14-112 (MWSIGAGALG…DQLGVPLYAV (99 aa)) form a thioredoxin fold region. Active-site redox-active residues include C85 and C88.

It belongs to the peroxiredoxin-like PRXL2 family. PRXL2A subfamily. As to expression, expressed in CSF1 and TNFSF11-stimulated CD14(+) peripheral blood mononuclear cells (PBMCs).

It is found in the cytoplasm. Its subcellular location is the secreted. Functionally, involved in redox regulation of the cell. Acts as an antioxidant. Inhibits TNFSF11-induced NFKB1 and JUN activation and osteoclast differentiation. May affect bone resorption and help to maintain bone mass. Acts as a negative regulator of macrophage-mediated inflammation by inhibiting macrophage production of inflammatory cytokines, probably through suppression of the MAPK signaling pathway. In Homo sapiens (Human), this protein is Peroxiredoxin-like 2A.